Consider the following 105-residue polypeptide: Fe-S protein maturation auxiliary factor PG_1777 (105 aa).

This sequence belongs to the Fe-S cluster assembly domain superfamily. MIP18-like family. In terms of assembly, putative homodimer; may be disulfide-linked.

Iron binding protein that protects DNA from Fenton chemistry-mediated damage caused by hydrogen peroxide induced oxidative stress. May be involved in iron-sulfur cluster assembly. In Porphyromonas gingivalis (strain ATCC BAA-308 / W83), this protein is Fe-S protein maturation auxiliary factor PG_1777.